Consider the following 256-residue polypeptide: Hemolymph lipopolysaccharide-binding protein (256 aa).

Residues 1–21 (MMNTRALLPLSVLLMATLCLC) form the signal peptide. Positions 22–33 (ELPIPILQRFVR) are excised as a propeptide. Asn-56 carries N-linked (GlcNAc...) asparagine glycosylation. The C-type lectin domain occupies 146–256 (IICQQEGGHL…KLPFVCEVEL (111 aa)). 2 cysteine pairs are disulfide-bonded: Cys-148–Cys-252 and Cys-230–Cys-244.

In terms of tissue distribution, hemolymph.

The protein resides in the secreted. In terms of biological role, participates probably in the elimination of foreign substances invading the insect abdominal cavity, and in trapping intracellular symbionts, when they leak from the mycetomes into the hemolymph. The protein is Hemolymph lipopolysaccharide-binding protein of Periplaneta americana (American cockroach).